Here is a 31-residue protein sequence, read N- to C-terminus: Cliotide T13 (31 aa).

Positions 1 to 31 (DTTPCGESCVWIPCVSSIVGCSCQNKVCYQN) form a cross-link, cyclopeptide (Asp-Asn). Disulfide bonds link cysteine 5–cysteine 21, cysteine 9–cysteine 23, and cysteine 14–cysteine 28.

In terms of processing, contains 3 disulfide bonds. This is a cyclic peptide. In terms of tissue distribution, expressed in seed but not in root nodules.

Functionally, probably participates in a plant defense mechanism. Not active against Gram-negative bacterium E.coli ATCC 700926 or Gram-positive bacterium S.aureus ATCC 12600 up to a concentration of 100 uM under low-salt conditions. This chain is Cliotide T13, found in Clitoria ternatea (Butterfly pea).